The sequence spans 86 residues: Anti-adapter protein IraP (86 aa).

A coiled-coil region spans residues 1–38 (MKNLIAELLVKLAQKEEEAKELTVQVEALEIVVTALLR).

Belongs to the IraP family. Interacts with RssB.

It is found in the cytoplasm. In terms of biological role, inhibits RpoS proteolysis by regulating RssB activity, thereby increasing the stability of the sigma stress factor RpoS especially during phosphate starvation, but also in stationary phase and during nitrogen starvation. Its effect on RpoS stability is due to its interaction with RssB, which probably blocks the interaction of RssB with RpoS, and the consequent delivery of the RssB-RpoS complex to the ClpXP protein degradation pathway. This Klebsiella pneumoniae (strain 342) protein is Anti-adapter protein IraP.